We begin with the raw amino-acid sequence, 562 residues long: Ycf55-like protein (562 aa).

One can recognise a Response regulatory domain in the interval threonine 7–histidine 125.

This sequence belongs to the ycf55 family.

The sequence is that of Ycf55-like protein from Synechocystis sp. (strain ATCC 27184 / PCC 6803 / Kazusa).